The primary structure comprises 792 residues: Host cell factor 2 (792 aa).

Kelch repeat units lie at residues 34–79 (LMII…GFVC), 83–130 (RILV…RLGH), 207–255 (KMYV…VIGN), and 257–303 (MYIF…VSDS). Residues 359-449 (APSQVQLIKA…QPATKETSMK (91 aa)) enclose the Fibronectin type-III 1 domain. A disordered region spans residues 399–447 (ASSDSSAAPNMQGVRMDPHRQGSNNIVPNSINDTINSTKTEQPATKETS). Polar residues predominate over residues 419–445 (QGSNNIVPNSINDTINSTKTEQPATKE). Lys-553 is covalently cross-linked (Glycyl lysine isopeptide (Lys-Gly) (interchain with G-Cter in SUMO2)). 2 consecutive Fibronectin type-III domains span residues 583-675 (TPSN…TCIP) and 677-787 (FPGA…GNNK).

As to quaternary structure, binds KMT2A/MLL1. Component of the MLL1/MLL complex, at least composed of KMT2A/MLL1, ASH2L, RBBP5, DPY30, WDR5, MEN1, HCFC1 and HCFC2. Interacts with TASOR. In terms of tissue distribution, highly expressed in testis. Detected at lower levels in spleen, thymus, prostate, ovary, small intestine and colon.

The protein localises to the cytoplasm. It localises to the nucleus. The protein is Host cell factor 2 (HCFC2) of Homo sapiens (Human).